The primary structure comprises 147 residues: Hemoglobin subunit gamma-1 (147 aa).

At glycine 2 the chain carries N-acetylglycine. Positions 3 to 147 (HFTEEDKATI…VASALSSRYH (145 aa)) constitute a Globin domain. Threonine 13 is subject to Phosphothreonine. Residues serine 45, serine 51, and serine 53 each carry the phosphoserine modification. N6-acetyllysine is present on lysine 60. Residue histidine 64 participates in heme b binding. Lysine 83 is modified (N6-acetyllysine). Histidine 93 is a binding site for heme b. Cysteine 94 carries the S-nitrosocysteine modification. Serine 140 is modified (phosphoserine).

It belongs to the globin family. Heterotetramer of two alpha chains and two gamma chains in fetal hemoglobin (Hb F). Red blood cells.

In terms of biological role, gamma chains make up the fetal hemoglobin F, in combination with alpha chains. The protein is Hemoglobin subunit gamma-1 (HBG1) of Gorilla gorilla gorilla (Western lowland gorilla).